The sequence spans 131 residues: Small ribosomal subunit protein uS8 (131 aa).

This sequence belongs to the universal ribosomal protein uS8 family. As to quaternary structure, part of the 30S ribosomal subunit. Contacts proteins S5 and S12.

Its function is as follows. One of the primary rRNA binding proteins, it binds directly to 16S rRNA central domain where it helps coordinate assembly of the platform of the 30S subunit. This is Small ribosomal subunit protein uS8 from Dictyoglomus turgidum (strain DSM 6724 / Z-1310).